Here is a 457-residue protein sequence, read N- to C-terminus: Bifunctional protein GlmU (457 aa).

The pyrophosphorylase stretch occupies residues 1–229 (MSNSAKSVVI…HSEMEGVNNR (229 aa)). UDP-N-acetyl-alpha-D-glucosamine contacts are provided by residues 11-14 (LAAG), Lys-25, Gln-76, 81-82 (GT), 103-105 (YGD), Gly-140, Glu-154, Asn-169, and Asn-227. Asp-105 contributes to the Mg(2+) binding site. Asn-227 is a Mg(2+) binding site. The tract at residues 230–250 (LQLAALERIYQTEQAERLLLE) is linker. The interval 251-457 (GVMLLDPARF…GWKRPVKKKQ (207 aa)) is N-acetyltransferase. UDP-N-acetyl-alpha-D-glucosamine-binding residues include Arg-333 and Lys-351. His-363 serves as the catalytic Proton acceptor. Positions 366 and 377 each coordinate UDP-N-acetyl-alpha-D-glucosamine. Acetyl-CoA-binding positions include Ala-380, 386-387 (NY), Ser-405, Ala-423, and Arg-440.

The protein in the N-terminal section; belongs to the N-acetylglucosamine-1-phosphate uridyltransferase family. In the C-terminal section; belongs to the transferase hexapeptide repeat family. Homotrimer. The cofactor is Mg(2+).

Its subcellular location is the cytoplasm. The catalysed reaction is alpha-D-glucosamine 1-phosphate + acetyl-CoA = N-acetyl-alpha-D-glucosamine 1-phosphate + CoA + H(+). The enzyme catalyses N-acetyl-alpha-D-glucosamine 1-phosphate + UTP + H(+) = UDP-N-acetyl-alpha-D-glucosamine + diphosphate. It participates in nucleotide-sugar biosynthesis; UDP-N-acetyl-alpha-D-glucosamine biosynthesis; N-acetyl-alpha-D-glucosamine 1-phosphate from alpha-D-glucosamine 6-phosphate (route II): step 2/2. Its pathway is nucleotide-sugar biosynthesis; UDP-N-acetyl-alpha-D-glucosamine biosynthesis; UDP-N-acetyl-alpha-D-glucosamine from N-acetyl-alpha-D-glucosamine 1-phosphate: step 1/1. It functions in the pathway bacterial outer membrane biogenesis; LPS lipid A biosynthesis. In terms of biological role, catalyzes the last two sequential reactions in the de novo biosynthetic pathway for UDP-N-acetylglucosamine (UDP-GlcNAc). The C-terminal domain catalyzes the transfer of acetyl group from acetyl coenzyme A to glucosamine-1-phosphate (GlcN-1-P) to produce N-acetylglucosamine-1-phosphate (GlcNAc-1-P), which is converted into UDP-GlcNAc by the transfer of uridine 5-monophosphate (from uridine 5-triphosphate), a reaction catalyzed by the N-terminal domain. This chain is Bifunctional protein GlmU, found in Proteus mirabilis (strain HI4320).